We begin with the raw amino-acid sequence, 114 residues long: MKGTLLLLALLVTGELGFQRTEACIPFFGVYLGILSGNRIGLHTELAPFDPTVEEKEAFEKIQDCYEEEGLKAKTEDMKLMTTILFSSECRSYYTKEVLKNILVKFSKKLTHGS.

A signal peptide spans 1-23; sequence MKGTLLLLALLVTGELGFQRTEA.

This sequence belongs to the secretoglobin family. Expressed in lacrimal gland.

It is found in the secreted. This chain is Secretoglobin family 2B member 2 (Scgb2b2), found in Mus musculus (Mouse).